The following is a 146-amino-acid chain: VHLTAEEKSLVSGLWGKVNVDEVGGEALGRLLIVYPWTQRFFDSFGDLSTPDAVMSNAKVKAHGKKVLNSFSDGLKNLDNLKGTFAKLSELHCDKLHVDPENFKLLGNVLVCVLAHHFGKEFTPQVQAAYQKVVAGVANALAHKYH.

Valine 1 is subject to N-acetylvaline. Positions 2–146 (HLTAEEKSLV…VANALAHKYH (145 aa)) constitute a Globin domain. At serine 44 the chain carries Phosphoserine. The residue at position 59 (lysine 59) is an N6-acetyllysine. Residue histidine 63 coordinates heme b. Lysine 82 carries the N6-acetyllysine modification. Position 92 (histidine 92) interacts with heme b. Position 93 is an S-nitrosocysteine (cysteine 93). Residue lysine 144 is modified to N6-acetyllysine.

The protein belongs to the globin family. In terms of assembly, heterotetramer of two alpha chains and two beta chains. In terms of tissue distribution, red blood cells.

Its function is as follows. Involved in oxygen transport from the lung to the various peripheral tissues. In Canis latrans (Coyote), this protein is Hemoglobin subunit beta (HBB).